A 282-amino-acid chain; its full sequence is Pantothenate synthetase (282 aa).

An ATP-binding site is contributed by 30–37 (MGFLHDGH). Histidine 37 (proton donor) is an active-site residue. Residue glutamine 60 coordinates (R)-pantoate. Residue glutamine 60 participates in beta-alanine binding. 146–149 (GQKD) contacts ATP. Glutamine 152 lines the (R)-pantoate pocket. Residues isoleucine 175 and 183-186 (KSSR) contribute to the ATP site.

Belongs to the pantothenate synthetase family. In terms of assembly, homodimer.

It localises to the cytoplasm. The enzyme catalyses (R)-pantoate + beta-alanine + ATP = (R)-pantothenate + AMP + diphosphate + H(+). Its pathway is cofactor biosynthesis; (R)-pantothenate biosynthesis; (R)-pantothenate from (R)-pantoate and beta-alanine: step 1/1. Its function is as follows. Catalyzes the condensation of pantoate with beta-alanine in an ATP-dependent reaction via a pantoyl-adenylate intermediate. In Campylobacter jejuni (strain RM1221), this protein is Pantothenate synthetase.